The following is a 440-amino-acid chain: C4-dicarboxylate transport protein (440 aa).

The next 9 helical transmembrane spans lie at 15-35 (VLVA…TGVA), 46-66 (LIKM…IAGM), 78-98 (YALL…LVVV), 146-166 (AFAN…GFAL), 190-210 (IINM…AFTI), 224-244 (LMAC…GGIC), 291-311 (VVGL…SIYL), 332-352 (ITLL…TGSG), and 354-374 (IVLA…LALI). A disordered region spans residues 419-440 (GGSPLVDTRPTDDLGVAEGPAR).

This sequence belongs to the dicarboxylate/amino acid:cation symporter (DAACS) (TC 2.A.23) family.

It is found in the cell inner membrane. Functionally, responsible for the transport of dicarboxylates such as succinate, fumarate, and malate from the periplasm across the membrane. The sequence is that of C4-dicarboxylate transport protein from Pseudomonas entomophila (strain L48).